The chain runs to 75 residues: Small ribosomal subunit protein bS18c (75 aa).

The protein belongs to the bacterial ribosomal protein bS18 family. Part of the 30S ribosomal subunit.

It is found in the plastid. The protein resides in the chloroplast. The protein is Small ribosomal subunit protein bS18c of Angiopteris evecta (Mule's foot fern).